The following is a 628-amino-acid chain: Serine/threonine-protein phosphatase 2A regulatory subunit psrA (628 aa).

The segment covering 1-22 has biased composition (polar residues); that stretch reads MKNDHINYQQNLSQSPILNSNK. Disordered stretches follow at residues 1-61, 500-558, and 577-628; these read MKND…QIPF, KKKQ…DKPS, and SSHR…YTFT. Composition is skewed to low complexity over residues 23 to 58 and 524 to 547; these read NQTQ…SPQQ and QINQ…NNNN. Residues 600–618 are compositionally biased toward basic and acidic residues; that stretch reads NNHTNHDSEIENEVKEDFR.

Belongs to the phosphatase 2A regulatory subunit B56 family. As to quaternary structure, PP2A consists of a trimeric holoenzyme, composed of a 37 kDa catalytic subunit (C subunit) and a 65 kDa constant regulatory subunit (A subunit), that associates with a variety of regulatory subunits (B subunit) such as phr2AB (B55) and psrA (B56 homolog). The trimer may partially dissociates into a core 'AC' dimer equally active compared to the trimer. Seems to play a role in proper anterior patterning (pstO and pstAB).

The protein localises to the cytoplasm. It localises to the cytosol. Involved in developmental cell fate decision. The polypeptide is Serine/threonine-protein phosphatase 2A regulatory subunit psrA (psrA) (Dictyostelium discoideum (Social amoeba)).